The sequence spans 374 residues: Cell division protein DivIB (374 aa).

The segment at 1-90 (MWKISNENDI…EEEHFADRLP (90 aa)) is disordered. The Cytoplasmic portion of the chain corresponds to 1-103 (MWKISNENDI…KTRNKRLYRR (103 aa)). A compositionally biased stretch (basic and acidic residues) spans 39 to 53 (YLKKQAEEAASKGEN). The span at 56–75 (AEVTITLQEQSQEEPQQHLP) shows a compositional bias: polar residues. A helical transmembrane segment spans residues 104-124 (LAFILTCLGTAILVALYFVSP). The Extracellular segment spans residues 125–374 (LSRLSEVTVS…GENQEVQQAE (250 aa)). One can recognise a POTRA domain in the interval 126–197 (SRLSEVTVSG…NSFKIDIQEY (72 aa)). The segment at 325–374 (KESEETGSEVSEDSAVENQEVVDPNAGVATDGANNGTPTNGENQEVQQAE) is disordered. The segment covering 326 to 339 (ESEETGSEVSEDSA) has biased composition (acidic residues). Over residues 356–374 (GANNGTPTNGENQEVQQAE) the composition is skewed to polar residues.

The protein belongs to the FtsQ/DivIB family. DivIB subfamily.

The protein localises to the cell membrane. Its function is as follows. Cell division protein that may be involved in stabilizing or promoting the assembly of the division complex. This chain is Cell division protein DivIB, found in Enterococcus faecalis (strain 62).